The chain runs to 605 residues: DNA primase (605 aa).

The CHC2-type zinc finger occupies 39–63 (CPFHHERTPSFHVVPDKKMYYCFGC). Positions 257 to 338 (RAAIICEGYM…EVRIVELNGG (82 aa)) constitute a Toprim domain. The Mg(2+) site is built by E263, D307, and D309.

It belongs to the DnaG primase family. As to quaternary structure, monomer. Interacts with DnaB. Zn(2+) serves as cofactor. Requires Mg(2+) as cofactor.

The catalysed reaction is ssDNA + n NTP = ssDNA/pppN(pN)n-1 hybrid + (n-1) diphosphate.. In terms of biological role, RNA polymerase that catalyzes the synthesis of short RNA molecules used as primers for DNA polymerase during DNA replication. The protein is DNA primase of Treponema pallidum (strain Nichols).